The sequence spans 317 residues: Pinoresinol reductase 2 (317 aa).

NADP(+) contacts are provided by Thr18, Ser20, Leu21, Arg41, Lys50, Ser90, Gly91, Arg95, Asn98, and Ser121. Met125 contributes to the (-)-pinoresinol binding site. NADP(+) is bound by residues Lys144 and Phe166. The active-site Proton acceptor is the Lys144. Gly178 lines the (-)-pinoresinol pocket.

The protein belongs to the NmrA-type oxidoreductase family. Isoflavone reductase subfamily. Forms homodimers. As to expression, expressed in roots. Detected in stems.

The catalysed reaction is (-)-lariciresinol + NADP(+) = (-)-pinoresinol + NADPH + H(+). In terms of biological role, reductase involved in lignan biosynthesis. Unlike conventional pinoresinol reductases that can reduce both pinoresinol and lariciresinol, PRR2 shows a strict substrate selectivity for (-)-pinoresinol. No activity with (+)-pinoresinol or lariciresinol. Abstracts the 4R-hydride from the NADPH cofactor during catalysis. The chain is Pinoresinol reductase 2 from Arabidopsis thaliana (Mouse-ear cress).